The sequence spans 1346 residues: Adhesion G protein-coupled receptor F5 (1346 aa).

The N-terminal stretch at 1-21 is a signal peptide; the sequence is MKSPRRTTLCLMFIVIYSSKA. Residues 22 to 1006 are Extracellular-facing; the sequence is ALNWNYESTI…MSPDSPDPSS (985 aa). 21 N-linked (GlcNAc...) asparagine glycosylation sites follow: asparagine 73, asparagine 94, asparagine 106, asparagine 188, asparagine 256, asparagine 272, asparagine 301, asparagine 315, asparagine 328, asparagine 398, asparagine 472, asparagine 487, asparagine 505, asparagine 540, asparagine 627, asparagine 649, asparagine 666, asparagine 820, asparagine 931, asparagine 963, and asparagine 982. The SEA domain maps to 166–273; it reads LQEDVTLNMR…NSFQAVTINE (108 aa). 3 consecutive Ig-like domains span residues 267-368, 369-466, and 471-561; these read QAVT…IDVM, PIQI…IKVT, and ANLT…KDVI. 2 disulfides stabilise this stretch: cysteine 293–cysteine 350 and cysteine 391–cysteine 449. A disulfide bond links cysteine 492 and cysteine 545. The GAIN-B domain occupies 842 to 1003; that stretch reads PPLSFSQTNV…SILMSPDSPD (162 aa). Disulfide bonds link cysteine 954–cysteine 985 and cysteine 973–cysteine 987. Residues 954-1003 are GPS; sequence CVFWNFRLANNTGGWDSSGCYVEEGDGDNVTCICDHLTSFSILMSPDSPD. Residues 991-1006 are tethered agonist; the sequence is TSFSILMSPDSPDPSS. A helical transmembrane segment spans residues 1007–1027; it reads LLGILLDIISYVGVGFSILSL. At 1028–1053 the chain is on the cytoplasmic side; the sequence is AACLVVEAVVWKSVTKNRTSYMRHTC. Residues 1054–1074 form a helical membrane-spanning segment; the sequence is IVNIAASLLVANTWFIVVAAI. The Extracellular segment spans residues 1075–1090; sequence QDNRYILCKTACVAAT. A helical transmembrane segment spans residues 1091–1111; it reads FFIHFFYLSVFFWMLTLGLML. Topologically, residues 1112 to 1128 are cytoplasmic; sequence FYRLVFILHETSRSTQK. Residues 1129–1149 traverse the membrane as a helical segment; the sequence is AIAFCLGYGCPLAISVITLGA. Topologically, residues 1150–1173 are extracellular; sequence TQPREVYTRKNVCWLNWEDTKALL. A helical membrane pass occupies residues 1174 to 1194; it reads AFAIPALIIVVVNITITIVVI. Residues 1195–1220 are Cytoplasmic-facing; sequence TKILRPSIGDKPCKQEKSSLFQISKS. A helical transmembrane segment spans residues 1221–1241; the sequence is IGVLTPLLGLTWGFGLTTVFP. The Extracellular portion of the chain corresponds to 1242–1244; it reads GTN. A helical transmembrane segment spans residues 1245–1265; that stretch reads LVFHIIFAILNVFQGLFILLF. At 1266-1346 the chain is on the cytoplasmic side; it reads GCLWDLKVQE…NSSSASSLLN (81 aa). Threonine 1300 carries the phosphothreonine modification. Serine 1307 carries the post-translational modification Phosphoserine. Residues 1327–1346 are disordered; sequence TPEATSSSLENSSSASSLLN. Positions 1329–1346 are enriched in low complexity; sequence EATSSSLENSSSASSLLN.

The protein belongs to the G-protein coupled receptor 2 family. Adhesion G-protein coupled receptor (ADGR) subfamily. Homodimer; disulfide-linked. Heterodimer of 2 chains generated by proteolytic processing; the large extracellular N-terminal fragment and the membrane-bound C-terminal fragment predominantly remain associated and non-covalently linked. Fragment generates by the processing enzyme furin remains attached to the extracellular N-terminal fragment. Interacts (via N-terminal extracellular domain) with SFTPD. Post-translationally, highly glycosylated. Proteolytically cleaved at multiple sites: one in the GPS region of the GAIN-B domain (S1 site) and the other in the SEA domain (S2 site). The proteolytic cleavage at S1 site generates an extracellular subunit and a seven-transmembrane subunit. The proteolytic cleavage at S2 site generates a fragment that undergoes proteolytic cleavage by the processing enzyme furin. In terms of tissue distribution, expressed in lung endothelial cells and in alveolar type II (ATII) cells (at protein level). Expressed high levels in subcutaneous adipose tissue in lean individuals and at lower levels in visceral fat. Expression levels in subcutaneous adipose tissue drastically drop in obese individuals.

The protein localises to the cell membrane. Its activity is regulated as follows. As an adhesion G protein-coupled receptor (aGPCR) exhibits a large N-terminal extracellular domain containing highly conserved GPCR autoproteolysis-inducing (GAIN) domain. During synthesis, intracellular autoproteolytic processing of nascent chain within the GAIN domain generates a mature protein, consisting of an N-terminal fragment that is non-covalently linked to the C-terminal fragment. The mature protein is routed to the plasma membrane where the N- and C-terminal fragments remain associated, forming the holoreceptor. Dissociation of the aGPCR fragments stimulates G protein signaling through the action of the tethered-peptide agonist stalk that is occluded within the GAIN domain in the holoreceptor form. This dissociation might be induced by ligand binding, such as that of sFNDC4. Adhesion G protein-coupled receptor. In alveolar type II (ATII or AT2) cells, required for normal lung surfactant homeostasis. Modulation of both surfactant secretion and uptake by ATII cells is mediated by the downstream activation of GNAQ/GNA11 proteins and may be a consequence of increased cortical F-actin assembly induced by ADGRF5 activation. In the kidney, may play a role in the regulation of acid excretion into the primary urine, possibly by regulating the surface expression of V-ATPase proton pump. As a receptor for soluble FNDC4 (sFNDC4), required for proper systemic glucose tolerance, specifically sensitizing white adipose tissue to insulin. Also plays a role in sFNDC4-induced decrease of local inflammation in white adipose tissue. In Homo sapiens (Human), this protein is Adhesion G protein-coupled receptor F5.